The following is a 349-amino-acid chain: Protein-glutamate methylesterase/protein-glutamine glutaminase 1 (349 aa).

A Response regulatory domain is found at 2–119 (RTLIVDDSAF…DVNKAEKELV (118 aa)). 4-aspartylphosphate is present on Asp53. In terms of domain architecture, CheB-type methylesterase spans 158 to 345 (ILIGSSTGGP…EEIVKRLEAK (188 aa)). Catalysis depends on residues Ser163, His190, and Asp287.

This sequence belongs to the CheB family. In terms of processing, phosphorylated by CheA. Phosphorylation of the N-terminal regulatory domain activates the methylesterase activity.

Its subcellular location is the cytoplasm. The enzyme catalyses [protein]-L-glutamate 5-O-methyl ester + H2O = L-glutamyl-[protein] + methanol + H(+). The catalysed reaction is L-glutaminyl-[protein] + H2O = L-glutamyl-[protein] + NH4(+). In terms of biological role, involved in chemotaxis. Part of a chemotaxis signal transduction system that modulates chemotaxis in response to various stimuli. Catalyzes the demethylation of specific methylglutamate residues introduced into the chemoreceptors (methyl-accepting chemotaxis proteins or MCP) by CheR. Also mediates the irreversible deamidation of specific glutamine residues to glutamic acid. This Methanosarcina acetivorans (strain ATCC 35395 / DSM 2834 / JCM 12185 / C2A) protein is Protein-glutamate methylesterase/protein-glutamine glutaminase 1.